A 241-amino-acid polypeptide reads, in one-letter code: NAD(P)H-quinone oxidoreductase subunit K (241 aa).

[4Fe-4S] cluster contacts are provided by cysteine 60, cysteine 61, cysteine 125, and cysteine 156. The segment at serine 220–aspartate 241 is disordered. Residues glutamine 222–aspartate 241 are compositionally biased toward basic and acidic residues.

The protein belongs to the complex I 20 kDa subunit family. NDH-1 can be composed of about 15 different subunits; different subcomplexes with different compositions have been identified which probably have different functions. The cofactor is [4Fe-4S] cluster.

It is found in the cellular thylakoid membrane. It catalyses the reaction a plastoquinone + NADH + (n+1) H(+)(in) = a plastoquinol + NAD(+) + n H(+)(out). The catalysed reaction is a plastoquinone + NADPH + (n+1) H(+)(in) = a plastoquinol + NADP(+) + n H(+)(out). In terms of biological role, NDH-1 shuttles electrons from an unknown electron donor, via FMN and iron-sulfur (Fe-S) centers, to quinones in the respiratory and/or the photosynthetic chain. The immediate electron acceptor for the enzyme in this species is believed to be plastoquinone. Couples the redox reaction to proton translocation, and thus conserves the redox energy in a proton gradient. Cyanobacterial NDH-1 also plays a role in inorganic carbon-concentration. In Prochlorococcus marinus (strain MIT 9215), this protein is NAD(P)H-quinone oxidoreductase subunit K.